Consider the following 489-residue polypeptide: Betaine aldehyde dehydrogenase (489 aa).

Residues T26 and D93 each coordinate K(+). 150–152 (GAW) lines the NAD(+) pocket. K162 serves as the catalytic Charge relay system. 176-179 (KPSE) is a binding site for NAD(+). I180 lines the K(+) pocket. NAD(+) is bound at residue 229–232 (GVET). L245 serves as a coordination point for K(+). Residue E251 is the Proton acceptor of the active site. Residues G253, C285, and E386 each coordinate NAD(+). The active-site Nucleophile is the C285. Position 285 is a cysteine sulfenic acid (-SOH) (C285). K456 and G459 together coordinate K(+). E463 serves as the catalytic Charge relay system.

This sequence belongs to the aldehyde dehydrogenase family. In terms of assembly, dimer of dimers. It depends on K(+) as a cofactor.

It carries out the reaction betaine aldehyde + NAD(+) + H2O = glycine betaine + NADH + 2 H(+). It functions in the pathway amine and polyamine biosynthesis; betaine biosynthesis via choline pathway; betaine from betaine aldehyde: step 1/1. Functionally, involved in the biosynthesis of the osmoprotectant glycine betaine. Catalyzes the irreversible oxidation of betaine aldehyde to the corresponding acid. The polypeptide is Betaine aldehyde dehydrogenase (Paraburkholderia xenovorans (strain LB400)).